The sequence spans 242 residues: Large ribosomal subunit protein uL3 (242 aa).

Q151 is subject to N5-methylglutamine.

The protein belongs to the universal ribosomal protein uL3 family. Part of the 50S ribosomal subunit. Forms a cluster with proteins L14 and L19. In terms of processing, methylated by PrmB.

In terms of biological role, one of the primary rRNA binding proteins, it binds directly near the 3'-end of the 23S rRNA, where it nucleates assembly of the 50S subunit. This chain is Large ribosomal subunit protein uL3, found in Zymomonas mobilis subsp. mobilis (strain ATCC 31821 / ZM4 / CP4).